Here is a 702-residue protein sequence, read N- to C-terminus: Kinesin-like protein KIF3A (702 aa).

Residues Asn14–Ile345 enclose the Kinesin motor domain. An ATP-binding site is contributed by Gly100–Thr107. The stretch at Pro355–Leu593 forms a coiled coil. Disordered stretches follow at residues Lys372–Glu424 and Leu667–Gln702. Residues Glu376 to Glu400 show a composition bias toward acidic residues. Positions Asp410 to Glu424 are enriched in basic and acidic residues. The interval Pro600–Gln702 is globular. Residues Thr675–Ser690 show a composition bias toward basic residues. At Ser690 the chain carries Phosphoserine.

This sequence belongs to the TRAFAC class myosin-kinesin ATPase superfamily. Kinesin family. Kinesin II subfamily. As to quaternary structure, heterodimer of KIF3A and KIF3B. Interacts with CIMAP3. Interacts with CLN3. Interacts with DCTN1. Interacts with FLCN. Interacts with AP3B1.

It localises to the cytoplasm. The protein resides in the cytoskeleton. It is found in the cell projection. The protein localises to the cilium. Its subcellular location is the microtubule organizing center. It localises to the centrosome. The protein resides in the centriole. Functionally, microtubule-based anterograde translocator for membranous organelles. Plus end-directed microtubule sliding activity in vitro. Plays a role in primary cilia formation. Plays a role in centriole cohesion and subdistal appendage organization and function. Regulates the formation of the subdistal appendage via recruitment of DCTN1 to the centriole. Also required for ciliary basal feet formation and microtubule anchoring to mother centriole. The chain is Kinesin-like protein KIF3A (KIF3A) from Pongo abelii (Sumatran orangutan).